Here is a 327-residue protein sequence, read N- to C-terminus: Beta-ketoacyl-[acyl-carrier-protein] synthase III (327 aa).

Active-site residues include Cys-114 and His-254. Residues 255–259 (QANRR) form an ACP-binding region. Asn-284 is an active-site residue.

The protein belongs to the thiolase-like superfamily. FabH family. As to quaternary structure, homodimer.

It localises to the cytoplasm. The catalysed reaction is malonyl-[ACP] + acetyl-CoA + H(+) = 3-oxobutanoyl-[ACP] + CO2 + CoA. It functions in the pathway lipid metabolism; fatty acid biosynthesis. In terms of biological role, catalyzes the condensation reaction of fatty acid synthesis by the addition to an acyl acceptor of two carbons from malonyl-ACP. Catalyzes the first condensation reaction which initiates fatty acid synthesis and may therefore play a role in governing the total rate of fatty acid production. Possesses both acetoacetyl-ACP synthase and acetyl transacylase activities. Its substrate specificity determines the biosynthesis of branched-chain and/or straight-chain of fatty acids. The protein is Beta-ketoacyl-[acyl-carrier-protein] synthase III of Lactobacillus helveticus (strain DPC 4571).